Consider the following 187-residue polypeptide: Elongation factor P (187 aa).

Belongs to the elongation factor P family.

Its subcellular location is the cytoplasm. The protein operates within protein biosynthesis; polypeptide chain elongation. Its function is as follows. Involved in peptide bond synthesis. Stimulates efficient translation and peptide-bond synthesis on native or reconstituted 70S ribosomes in vitro. Probably functions indirectly by altering the affinity of the ribosome for aminoacyl-tRNA, thus increasing their reactivity as acceptors for peptidyl transferase. This is Elongation factor P from Mycobacteroides abscessus (strain ATCC 19977 / DSM 44196 / CCUG 20993 / CIP 104536 / JCM 13569 / NCTC 13031 / TMC 1543 / L948) (Mycobacterium abscessus).